Consider the following 223-residue polypeptide: uncharacterized protein (223 aa).

The 112-residue stretch at 5–116 folds into the Response regulatory domain; that stretch reads RILIVEDDVM…ELLLRMRNML (112 aa). At Asp-52 the chain carries 4-aspartylphosphate. The ompR/PhoB-type DNA-binding region spans 121-219; it reads GTFTQIKHLY…IYGEGYRLNT (99 aa).

In terms of processing, phosphorylated by YbdK.

The protein localises to the cytoplasm. Functionally, member of the two-component regulatory system YbdK/YbdJ. This is an uncharacterized protein from Bacillus subtilis (strain 168).